Reading from the N-terminus, the 121-residue chain is Class I hydrophobin 2 (121 aa).

The first 18 residues, 1 to 18, serve as a signal peptide directing secretion; the sequence is MQFTTIVMTLAAAVAVTA. Intrachain disulfides connect Cys-52–Cys-101, Cys-60–Cys-94, Cys-61–Cys-79, and Cys-102–Cys-116. Residue Asn-83 is glycosylated (N-linked (GlcNAc...) asparagine).

Belongs to the fungal hydrophobin family. Self-assembles to form functional amyloid fibrils called rodlets. Self-assembly into fibrillar rodlets occurs spontaneously at hydrophobic:hydrophilic interfaces and the rodlets further associate laterally to form amphipathic monolayers. Expressed in conidia and aerial hyphae.

Its subcellular location is the secreted. The protein localises to the cell wall. Functionally, aerial growth, conidiation, and dispersal of filamentous fungi in the environment rely upon a capability of their secreting small amphipathic proteins called hydrophobins (HPBs) with low sequence identity. Class I can self-assemble into an outermost layer of rodlet bundles on aerial cell surfaces, conferring cellular hydrophobicity that supports fungal growth, development and dispersal; whereas Class II form highly ordered films at water-air interfaces through intermolecular interactions but contribute nothing to the rodlet structure. Hcf-2 is a class I hydrophobin that is not necessary for the development of hyphae or conidia but contributes to cell surface hydrophobicity. The polypeptide is Class I hydrophobin 2 (Passalora fulva (Tomato leaf mold)).